The sequence spans 485 residues: MKEESILKKCDSSSIKHVPSTPLETNCPDKYNPKTWPIRLKVRNVIVISSMTFLNQYGDSVFAPSISNIAEQFHASRTLVTLGATLYTLGILFGNLIFAPLSEQFGRRPIYLIGYSVFALLQIPIALSVNLAMFLVFRFFSGLFGSVGLSNGSGSLADLFEKKDRGKYMVIYFTVLSIGPGIAPIISGFISQSSIGWQWEFWILLILSGFNLFWAFLLLKETYPPVLNRKKFEKYGEIGENEPVALRLTGKQLLIKLLILLSMKKPISILLSQPILICVACTIGSIYGMINLVLIAFSEVWKSSYDFSPGISGLMYISITLGLFSAVFIAMPINQKFYSYLVKRNGGEGEPEFRLPMGFIGITLFEIGILLFGWTARYKIFWFVPTIGSAIMGGGYIMTSNPLNMYVVDSYGIYSASASAGVKIFQLLFGAIFPLFAESLFRRLNYGWGCTLLAFILLACGCSLPILFKYGKQIRNLRPFDPSKY.

Transmembrane regions (helical) follow at residues 79 to 99 (LVTL…LIFA), 117 to 137 (VFAL…FLVF), 139 to 159 (FFSG…LADL), 170 to 190 (VIYF…SGFI), 199 to 219 (WEFW…FLLL), 275 to 295 (ILIC…LVLI), 313 to 333 (GLMY…AMPI), 355 to 375 (LPMG…FGWT), 380 to 400 (IFWF…IMTS), 421 to 441 (GVKI…ESLF), and 448 to 468 (WGCT…PILF).

The protein belongs to the major facilitator superfamily. CAR1 family.

The protein localises to the membrane. This is an uncharacterized protein from Schizosaccharomyces pombe (strain 972 / ATCC 24843) (Fission yeast).